We begin with the raw amino-acid sequence, 159 residues long: Type IV major alpha-pilin (159 aa).

The propeptide at 1 to 6 (MNAQKG) is leader sequence. F7 is subject to N-methylphenylalanine. Residues 7–27 (FTLIELMIVIAIIGILAAIAL) traverse the membrane as a helical segment. A disordered region spans residues 64–87 (VLSEESSTSKENIGLTSSETSTKP). Polar residues predominate over residues 67-87 (EESSTSKENIGLTSSETSTKP). Residues C137 and C156 are joined by a disulfide bond.

This sequence belongs to the N-Me-Phe pilin family. As to quaternary structure, major component of the type IV pilus (T4P) that plays a role in surface and attachment to the host epithelial tissues.

It is found in the fimbrium. The protein resides in the membrane. The sequence is that of Type IV major alpha-pilin (tfpI) from Moraxella bovis.